A 539-amino-acid polypeptide reads, in one-letter code: Eukaryotic translation initiation factor 3 subunit L (539 aa).

A PCI domain is found at 306 to 514 (TFSDILLYIQ…IHIADTKVSH (209 aa)).

This sequence belongs to the eIF-3 subunit L family. In terms of assembly, component of the eukaryotic translation initiation factor 3 (eIF-3) complex. The eIF-3 complex interacts with pix.

The protein resides in the cytoplasm. Component of the eukaryotic translation initiation factor 3 (eIF-3) complex, which is involved in protein synthesis of a specialized repertoire of mRNAs and, together with other initiation factors, stimulates binding of mRNA and methionyl-tRNAi to the 40S ribosome. The eIF-3 complex specifically targets and initiates translation of a subset of mRNAs involved in cell proliferation. The sequence is that of Eukaryotic translation initiation factor 3 subunit L from Drosophila sechellia (Fruit fly).